A 490-amino-acid chain; its full sequence is 2-succinylbenzoate--CoA ligase (490 aa).

It belongs to the ATP-dependent AMP-binding enzyme family. MenE subfamily.

The catalysed reaction is 2-succinylbenzoate + ATP + CoA = 2-succinylbenzoyl-CoA + AMP + diphosphate. It participates in quinol/quinone metabolism; 1,4-dihydroxy-2-naphthoate biosynthesis; 1,4-dihydroxy-2-naphthoate from chorismate: step 5/7. The protein operates within quinol/quinone metabolism; menaquinone biosynthesis. In terms of biological role, converts 2-succinylbenzoate (OSB) to 2-succinylbenzoyl-CoA (OSB-CoA). The sequence is that of 2-succinylbenzoate--CoA ligase from Geobacillus kaustophilus (strain HTA426).